Consider the following 143-residue polypeptide: Large ribosomal subunit protein uL11 (143 aa).

Belongs to the universal ribosomal protein uL11 family. Part of the ribosomal stalk of the 50S ribosomal subunit. Interacts with L10 and the large rRNA to form the base of the stalk. L10 forms an elongated spine to which L12 dimers bind in a sequential fashion forming a multimeric L10(L12)X complex. In terms of processing, one or more lysine residues are methylated.

Functionally, forms part of the ribosomal stalk which helps the ribosome interact with GTP-bound translation factors. The protein is Large ribosomal subunit protein uL11 of Herminiimonas arsenicoxydans.